The sequence spans 704 residues: Elongation factor G (704 aa).

The tr-type G domain maps to 8 to 290 (ARYRNIGISA…AVIDYLPSPV (283 aa)). GTP is bound by residues 17 to 24 (AHIDAGKT), 88 to 92 (DTPGH), and 142 to 145 (NKMD).

The protein belongs to the TRAFAC class translation factor GTPase superfamily. Classic translation factor GTPase family. EF-G/EF-2 subfamily.

It is found in the cytoplasm. Catalyzes the GTP-dependent ribosomal translocation step during translation elongation. During this step, the ribosome changes from the pre-translocational (PRE) to the post-translocational (POST) state as the newly formed A-site-bound peptidyl-tRNA and P-site-bound deacylated tRNA move to the P and E sites, respectively. Catalyzes the coordinated movement of the two tRNA molecules, the mRNA and conformational changes in the ribosome. In Salmonella arizonae (strain ATCC BAA-731 / CDC346-86 / RSK2980), this protein is Elongation factor G.